The primary structure comprises 1136 residues: Type I inositol polyphosphate 5-phosphatase 13 (1136 aa).

5 WD repeats span residues Glu147–Cys185, Val205–Asp244, Ala259–Leu297, Glu436–Asn475, and Ser515–Asn552. Catalytic regions lie at residues Asp782–Thr798 and Lys861–Thr876. Lys940 participates in a covalent cross-link: Glycyl lysine isopeptide (Lys-Gly) (interchain with G-Cter in ubiquitin). The tract at residues Lys1104 to Arg1136 is disordered. The span at Pro1124–Arg1136 shows a compositional bias: basic and acidic residues.

Belongs to the inositol polyphosphate 5-phosphatase family. Interacts with KIN10, but not with PHOT1. It depends on Mg(2+) as a cofactor. As to expression, expressed in young seedlings and flowers. Highly expressed in anther and pollen grains, but not in pistils. Not detected in maturated roots, stems and rosette leaves.

The protein localises to the nucleus. The enzyme catalyses 1D-myo-inositol 1,4,5-trisphosphate + H2O = 1D-myo-inositol 1,4-bisphosphate + phosphate. Its function is as follows. Converts inositol 1,4,5-trisphosphate (Ins(1,4,5)P3) to inositol 1,4-bisphosphate. Modulates cotyledon vein development through regulating auxin homeostasis. Involved in blue light responses. Decreases the amount of KIN10 degraded by the proteasome under low nutrient conditions. Participates with IP5P12 in the control of Ins(1,4,5)P3/Ca(2+) levels that is crucial for maintaining pollen dormancy and regulating early germination of pollen. May modulate auxin transport by regulating vesicle trafficking and thereby plays a role in root gravitropism. This is Type I inositol polyphosphate 5-phosphatase 13 from Arabidopsis thaliana (Mouse-ear cress).